Consider the following 471-residue polypeptide: Adenosylhomocysteinase (471 aa).

Substrate contacts are provided by threonine 60, aspartate 135, and glutamate 196. 197–199 (TTT) serves as a coordination point for NAD(+). Substrate is bound by residues lysine 226 and aspartate 230. Residues asparagine 231, 260 to 265 (GYGDVG), glutamate 283, asparagine 318, 339 to 341 (IGH), and asparagine 387 each bind NAD(+).

This sequence belongs to the adenosylhomocysteinase family. The cofactor is NAD(+).

It is found in the cytoplasm. It catalyses the reaction S-adenosyl-L-homocysteine + H2O = L-homocysteine + adenosine. The protein operates within amino-acid biosynthesis; L-homocysteine biosynthesis; L-homocysteine from S-adenosyl-L-homocysteine: step 1/1. Functionally, may play a key role in the regulation of the intracellular concentration of adenosylhomocysteine. The protein is Adenosylhomocysteinase of Chlorobium phaeovibrioides (strain DSM 265 / 1930) (Prosthecochloris vibrioformis (strain DSM 265)).